Consider the following 515-residue polypeptide: Microtubule-associated protein 70-4 (515 aa).

Coiled coils occupy residues 26-106 and 136-351; these read VVDE…ALSA and LESD…NTSA. A required for targeting to microtubules region spans residues 208 to 410; the sequence is LLEKSNRQQV…KQPGSETEAA (203 aa). Residues 340-515 are disordered; that stretch reads DDMRNESSNT…VKSTKDSCEI (176 aa). Residues 345 to 362 are compositionally biased toward polar residues; the sequence is ESSNTSASNKDNATSKQA. Residues 364-374 are compositionally biased toward low complexity; it reads PKRSSSQPRRP. Basic and acidic residues-rich tracts occupy residues 409 to 425, 450 to 461, and 484 to 515; these read AAEK…DSPR, KVADDAGKENKE, and SEHE…SCEI.

It belongs to the MAP70 family.

Its subcellular location is the cytoplasm. It localises to the cytoskeleton. In terms of biological role, plant-specific protein that interact with microtubules. This is Microtubule-associated protein 70-4 (MAP70.4) from Oryza sativa subsp. japonica (Rice).